A 450-amino-acid polypeptide reads, in one-letter code: Tubulin alpha chain (450 aa).

The MREC motif signature appears at 1-4; that stretch reads MREC. Gln-11 contributes to the GTP binding site. At Lys-40 the chain carries N6-acetyllysine. GTP-binding residues include Glu-71, Ser-140, Gly-144, Thr-145, Thr-179, Asn-206, and Asn-228. Position 71 (Glu-71) interacts with Mg(2+). The active site involves Glu-254. Glu-444 carries the post-translational modification 5-glutamyl polyglutamate.

This sequence belongs to the tubulin family. In terms of assembly, dimer of alpha and beta chains. A typical microtubule is a hollow water-filled tube with an outer diameter of 25 nm and an inner diameter of 15 nM. Alpha-beta heterodimers associate head-to-tail to form protofilaments running lengthwise along the microtubule wall with the beta-tubulin subunit facing the microtubule plus end conferring a structural polarity. Microtubules usually have 13 protofilaments but different protofilament numbers can be found in some organisms and specialized cells. Mg(2+) is required as a cofactor. Some glutamate residues at the C-terminus are polyglycylated, resulting in polyglycine chains on the gamma-carboxyl group. Glycylation is mainly limited to tubulin incorporated into axonemes (cilia and flagella) whereas glutamylation is prevalent in neuronal cells, centrioles, axonemes, and the mitotic spindle. Both modifications can coexist on the same protein on adjacent residues, and lowering polyglycylation levels increases polyglutamylation, and reciprocally. The precise function of polyglycylation is still unclear. Post-translationally, some glutamate residues at the C-terminus are polyglutamylated, resulting in polyglutamate chains on the gamma-carboxyl group. Polyglutamylation plays a key role in microtubule severing by spastin (SPAST). SPAST preferentially recognizes and acts on microtubules decorated with short polyglutamate tails: severing activity by SPAST increases as the number of glutamates per tubulin rises from one to eight, but decreases beyond this glutamylation threshold. In terms of processing, acetylation of alpha chains at Lys-40 is located inside the microtubule lumen. This modification has been correlated with increased microtubule stability, intracellular transport and ciliary assembly. Undergoes a tyrosination/detyrosination cycle, the cyclic removal and re-addition of a C-terminal tyrosine residue by the enzymes tubulin tyrosine carboxypeptidase (MATCAP, VASH1 or VASH2) and tubulin tyrosine ligase (TTL), respectively. Post-translationally, tyrosination promotes microtubule interaction with CAP-Gly microtubule plus-end tracking proteins. Tyrosinated tubulins regulate the initiation of dynein-driven motility. In terms of processing, detyrosination is involved in metaphase plate congression by guiding chromosomes during mitosis. Detyrosination increases microtubules-dependent mechanotransduction in dystrophic cardiac and skeletal muscle. In cardiomyocytes, detyrosinated microtubules are required to resist to contractile compression during contraction.

The protein localises to the cytoplasm. The protein resides in the cytoskeleton. It carries out the reaction GTP + H2O = GDP + phosphate + H(+). Tubulin is the major constituent of microtubules, a cylinder consisting of laterally associated linear protofilaments composed of alpha- and beta-tubulin heterodimers. Microtubules grow by the addition of GTP-tubulin dimers to the microtubule end, where a stabilizing cap forms. Below the cap, tubulin dimers are in GDP-bound state, owing to GTPase activity of alpha-tubulin. The protein is Tubulin alpha chain of Notophthalmus viridescens (Eastern newt).